Here is a 493-residue protein sequence, read N- to C-terminus: Glycerol kinase (493 aa).

Thr-11 contacts ADP. Residues Thr-11, Thr-12, and Ser-13 each contribute to the ATP site. Residue Thr-11 participates in sn-glycerol 3-phosphate binding. Residue Arg-15 participates in ADP binding. The sn-glycerol 3-phosphate site is built by Arg-80, Glu-81, Tyr-132, and Asp-241. Glycerol contacts are provided by Arg-80, Glu-81, Tyr-132, Asp-241, and Gln-242. 2 residues coordinate ADP: Thr-263 and Gly-306. 4 residues coordinate ATP: Thr-263, Gly-306, Gln-310, and Gly-408. Gly-408 is a binding site for ADP.

Belongs to the FGGY kinase family.

It catalyses the reaction glycerol + ATP = sn-glycerol 3-phosphate + ADP + H(+). The protein operates within polyol metabolism; glycerol degradation via glycerol kinase pathway; sn-glycerol 3-phosphate from glycerol: step 1/1. With respect to regulation, inhibited by fructose 1,6-bisphosphate (FBP). Its function is as follows. Key enzyme in the regulation of glycerol uptake and metabolism. Catalyzes the phosphorylation of glycerol to yield sn-glycerol 3-phosphate. This Cereibacter sphaeroides (strain ATCC 17029 / ATH 2.4.9) (Rhodobacter sphaeroides) protein is Glycerol kinase.